The following is a 346-amino-acid chain: GTPase Obg (346 aa).

The region spanning 1–159 is the Obg domain; the sequence is MKFLDEAKVY…RWIWLRLKLI (159 aa). In terms of domain architecture, OBG-type G spans 160–327; the sequence is ADAGLVGLPN…ALRALVAVIG (168 aa). Residues 166–173, 191–195, 212–215, 279–282, and 308–310 each bind GTP; these read GLPNAGKS, FTTLH, DIPG, NKID, and SAA. The Mg(2+) site is built by S173 and T193.

The protein belongs to the TRAFAC class OBG-HflX-like GTPase superfamily. OBG GTPase family. As to quaternary structure, monomer. Mg(2+) serves as cofactor.

The protein resides in the cytoplasm. Its function is as follows. An essential GTPase which binds GTP, GDP and possibly (p)ppGpp with moderate affinity, with high nucleotide exchange rates and a fairly low GTP hydrolysis rate. Plays a role in control of the cell cycle, stress response, ribosome biogenesis and in those bacteria that undergo differentiation, in morphogenesis control. This Bradyrhizobium diazoefficiens (strain JCM 10833 / BCRC 13528 / IAM 13628 / NBRC 14792 / USDA 110) protein is GTPase Obg.